The chain runs to 314 residues: Ribonuclease Z (314 aa).

Zn(2+)-binding residues include His-61, His-63, Asp-65, His-66, His-137, Asp-207, and His-263. Asp-65 (proton acceptor) is an active-site residue.

This sequence belongs to the RNase Z family. In terms of assembly, homodimer. The cofactor is Zn(2+).

It catalyses the reaction Endonucleolytic cleavage of RNA, removing extra 3' nucleotides from tRNA precursor, generating 3' termini of tRNAs. A 3'-hydroxy group is left at the tRNA terminus and a 5'-phosphoryl group is left at the trailer molecule.. Functionally, zinc phosphodiesterase, which displays some tRNA 3'-processing endonuclease activity. Probably involved in tRNA maturation, by removing a 3'-trailer from precursor tRNA. The protein is Ribonuclease Z of Thermococcus kodakarensis (strain ATCC BAA-918 / JCM 12380 / KOD1) (Pyrococcus kodakaraensis (strain KOD1)).